Consider the following 154-residue polypeptide: Transcriptional repressor NrdR (154 aa).

A zinc finger lies at 3-34 (CPFCAHPDTRVADSRLMEERNAVRRRRHCPNC). The region spanning 49 to 139 (PAVIGPDKKR…LHKRFDNPAD (91 aa)) is the ATP-cone domain.

Belongs to the NrdR family. Requires Zn(2+) as cofactor.

Functionally, negatively regulates transcription of bacterial ribonucleotide reductase nrd genes and operons by binding to NrdR-boxes. This is Transcriptional repressor NrdR from Neisseria meningitidis serogroup B (strain ATCC BAA-335 / MC58).